A 480-amino-acid polypeptide reads, in one-letter code: Sestrin-2 (480 aa).

At Met1 the chain carries N-acetylmethionine. The disordered stretch occupies residues 20–45 (PGGVGDSGPGEEQRESRARRGPRGPS). Positions 66-239 (GLEALMSSGR…APTPPSEQSS (174 aa)) are N-terminal domain; mediates the alkylhydroperoxide reductase activity. Cys125 (cysteine sulfenic acid (-SOH) intermediate) is an active-site residue. Residue Lys175 forms a Glycyl lysine isopeptide (Lys-Gly) (interchain with G-Cter in ubiquitin) linkage. Disordered stretches follow at residues 222 to 252 (ADGSPAPQAPTPPSEQSSPPSRDPLNNSGGF) and 272 to 291 (LLRDEGTSQEEMESRFELEK). Ser249 carries the post-translational modification Phosphoserine. The interval 308-480 (PHPDMLCFVE…ALRAITRYMT (173 aa)) is C-terminal domain; mediates TORC1 regulation. Residues 374–377 (TYNT), Thr386, and Glu451 each bind L-leucine.

This sequence belongs to the sestrin family. As to quaternary structure, interacts with the GATOR2 complex which is composed of MIOS, SEC13, SEH1L, WDR24 and WDR59; the interaction is negatively regulated by leucine. Conveys leucine availability via direct interaction with SEH1L and WDR24 components of the GATOR2 complex. Interacts with RRAGA, RRAGB, RRAGC and RRAGD; may function as a guanine nucleotide dissociation inhibitor for RRAGs and regulate them. May interact with the TORC2 complex. Interacts with KEAP1, RBX1, SQSTM and ULK1; to regulate the degradation of KEAP1. May also associate with the complex composed of TSC1, TSC2 and the AMP-responsive protein kinase/AMPK to regulate TORC1 signaling. May interact with PRDX1. Phosphorylated by ULK1 at multiple sites. Post-translationally, ubiquitinated at Lys-175 by RNF167 via 'Lys-63'-linked polyubiquitination in response to leucine deprivation: ubiquitination promotes SESN2-interaction with the GATOR2 complex, leading to inhibit the TORC1 signaling pathway. Deubiquitinated at Lys-175 by STAMBPL1, promoting the TORC1 signaling pathway. Ubiquitinated by RNF186; ubiquitination mediates proteasomal degradation. Widely expressed.

The protein localises to the cytoplasm. It carries out the reaction a hydroperoxide + L-cysteinyl-[protein] = S-hydroxy-L-cysteinyl-[protein] + an alcohol. Functions as an intracellular leucine sensor that negatively regulates the mTORC1 signaling pathway through the GATOR complex. In absence of leucine, binds the GATOR subcomplex GATOR2 and prevents mTORC1 signaling. Binding of leucine to SESN2 disrupts its interaction with GATOR2 thereby activating the TORC1 signaling pathway. This stress-inducible metabolic regulator also plays a role in protection against oxidative and genotoxic stresses. May negatively regulate protein translation in response to endoplasmic reticulum stress, via mTORC1. May positively regulate the transcription by NFE2L2 of genes involved in the response to oxidative stress by facilitating the SQSTM1-mediated autophagic degradation of KEAP1. May also mediate TP53 inhibition of TORC1 signaling upon genotoxic stress. Moreover, may prevent the accumulation of reactive oxygen species (ROS) through the alkylhydroperoxide reductase activity born by the N-terminal domain of the protein. Was originally reported to contribute to oxidative stress resistance by reducing PRDX1. However, this could not be confirmed. The protein is Sestrin-2 of Homo sapiens (Human).